A 631-amino-acid chain; its full sequence is MSTNQETRGFQSEVKQLLQLMIHSLYSNKEIFLRELISNASDAADKLRFKALSVPELYEGDGDLKVRIRFDEEKGTLTISDNGIGMTRDEVIDHLGTIAKSGTKEFLSALGQDQAKDSQLIGQFGVGFYSAFIVADKVTVKTRAAGVSADKAVLWESAGEGEYSVADIDKKERGTEITLHLREDEKAFLNDWRLREIIGKYSDHIGLPVEILAKEYDDEGKETGIKWEKINKAQALWTRAKNEISEEEYQEFYKHLSHDFTDPLLWAHNKVEGNQEYTSLLYVPAKAPWDLFNREHKHGLKLYVQRVFIMDDAQVFMPNYLRFMRGLLDSNDLPLNVSREILQDNKVTSALRKALTKRALQMLEKLAKDDAEKYQRFWQEFGLVLKEGPAEDFANKETIAKLLRFASTHNDSSQQSVSLEDYVARMKEGQKAIYYITADTYVAAKNSPHLELFNKKGIEVLLLSDRIDEWMLSYLTEFDGKPLQTISKADLDLGDLADKEEDSQKAQDEQYASFVERVKTLLGERVKEVRLTHRLTDTPAVVSTGDDQMTTQMAKLFAAAGQAMPEVKYTFELNPEHGLVQKVAEIADEQQFADWIELLLEQAMLAERGSLENPVAFIKRMNTLLSKLTSH.

The segment at 1–339 (MSTNQETRGF…SNDLPLNVSR (339 aa)) is a; substrate-binding. The segment at 340–555 (EILQDNKVTS…DDQMTTQMAK (216 aa)) is b. The c stretch occupies residues 556-631 (LFAAAGQAMP…NTLLSKLTSH (76 aa)).

It belongs to the heat shock protein 90 family. In terms of assembly, homodimer.

Its subcellular location is the cytoplasm. In terms of biological role, molecular chaperone. Has ATPase activity. This chain is Chaperone protein HtpG, found in Pasteurella multocida (strain Pm70).